The primary structure comprises 1369 residues: MAQLTKNFGKIVKTLTIPHLLNLQIDSYELFLQKDIPPTSREDAGLEGVFRSVFPIEDFNRTASLEYVSYEIGEPKYDVPECIAKGLTFEAPLRIKVRLVVYDVDEETENRTIRDIKEQIIYFGTVPLMTEKGTFIINGTERVIVNQLQRSPGIIFEHDSGKSHTSRKVLYSCRIIPMRGSWLDFDYDHKDILYVRIDRRRKMPATILFKAMGMSRADILRYFYEVEHFTFEPHHVFRQVLPDFYRKEKAYSEIRDSEGKVIVAVDKPITKRAWRLMLEAGIEKVEVDPATLLGLFLAEDLADPATGEVMAEAGDELNADLIEKLKDAGIVELSLLHTRGVDTSSSIRDTLALDKTIDTITAQVEIYRRLRPSSPPTPEIAANFFENLFRNPDYYDLSPVGRYKINARLKVDQPLDFRTLANDDILKAVKHLTFLKDSHGPADDIDHLGNRRVRPVGELVENQYRIGLVRMERAIKERMSLQEVATLMPHDLINPKPVAAVLKEFFGTSQLSQFMDQTNPLSEVTHKRRLSALGPGGLTRERAGFEVRDVHTSHYGRICPIETPEGPNIGLIVSLTTHSKVNDFGFIETPYKVVKDGQLTGETIYLDATREIDEVIAGANAPLDENKAFINSMVGARIRGDQVVIPREQVTLMDISPSQIVSVSAALIPFLEHDDANRALMGSNMQRQAVPLLRCEQPLVGTGMEGAVAKDSGSCILAEGEGFVHYADAERIIVCYDDPAVGTDTGSAKTYELLKHHKSNQNTCFGQVPRVLVGQRVVKGDVLADGPGIRDGELALGKNLLVAFMPWCGYNYEDSILISENAVKDDTFTSVHIEEFEVVARDTKLGPEEITRDIPNVGEEMLKDLDDCGIIRIGARVAPDDILVGKITPKGETQLTPEEKLLRAIFGDKARDVKNTSLKVPPGIEGTVIDVRVFNRRSGEKDDRTRQIEDFELARLDTKEGQHAAAIAANVRRRLWPVVSGKTVFQTIKGVKKGEVLLEANHPMTQEVLEALPVKKLSGLFTSKETNEAVAEVLDEYDRHIQFIKGLYDQKREKTTEGDDLPPGVIKMVKVYVAVKRKLNVGDKMAGRHGNKGVVSCILPIEDMPFFSHGRPVDIVLNPLGVPSRMNIGQILETHLGWAGMELGRQLAEMVDSGKAMEGVRDRAKAVFDTEETTALIDGMSDDDLRDALRALKNGIVAKTPVFDGATEDELWSWLKLAGLPEDGKVTLYDGRTGEAFHRPVTVGCMYILKLHHLVDEKIHARSTGPYSLVTQQPLGGKAQFGGQRLGEMEVWALEAYGASYLLQEFLTVKSDDVGGRVKMYEKIVKGDNFLEAGLPESFNVLVKELMSLGLDVDLIQDEKKIAKAPPRR.

The protein belongs to the RNA polymerase beta chain family. As to quaternary structure, the RNAP catalytic core consists of 2 alpha, 1 beta, 1 beta' and 1 omega subunit. When a sigma factor is associated with the core the holoenzyme is formed, which can initiate transcription.

The enzyme catalyses RNA(n) + a ribonucleoside 5'-triphosphate = RNA(n+1) + diphosphate. In terms of biological role, DNA-dependent RNA polymerase catalyzes the transcription of DNA into RNA using the four ribonucleoside triphosphates as substrates. This is DNA-directed RNA polymerase subunit beta from Solidesulfovibrio magneticus (strain ATCC 700980 / DSM 13731 / RS-1) (Desulfovibrio magneticus).